The chain runs to 198 residues: MAVQSTPKTLKEKLGGRNIFLIGMMGSGKSQTGPVLAKMINYAFVDTDDVIEKASKQSISSIFEKDGEKVFRDVEKKVLKEISQHHSLVIATGGGLVTLPENWGILHQGIVIWLDLDLRRSIKRLESDHKRRPLLLGDNLAENFSQIYESRKPIYLESDLRIEVEDQSPYEVATMVAEHLQSILIDQEPQAERHTTEL.

An ATP-binding site is contributed by 26 to 31 (GSGKSQ). Position 30 (S30) interacts with Mg(2+). D48, R72, and G94 together coordinate substrate. Residue R132 participates in ATP binding. Substrate is bound at residue R151. Position 167 (Q167) interacts with ATP.

It belongs to the shikimate kinase family. As to quaternary structure, monomer. It depends on Mg(2+) as a cofactor.

It localises to the cytoplasm. It catalyses the reaction shikimate + ATP = 3-phosphoshikimate + ADP + H(+). It participates in metabolic intermediate biosynthesis; chorismate biosynthesis; chorismate from D-erythrose 4-phosphate and phosphoenolpyruvate: step 5/7. In terms of biological role, catalyzes the specific phosphorylation of the 3-hydroxyl group of shikimic acid using ATP as a cosubstrate. This Prochlorococcus marinus (strain NATL2A) protein is Shikimate kinase.